The sequence spans 290 residues: Small ribosomal subunit biogenesis GTPase RsgA (290 aa).

The CP-type G domain occupies 62–213 (KNSLVRPPIV…IADTPGFSSL (152 aa)). Residues 111 to 114 (SKMD) and 156 to 164 (GQTGVGKST) contribute to the GTP site. Zn(2+) is bound by residues C237, C242, H244, and C250.

The protein belongs to the TRAFAC class YlqF/YawG GTPase family. RsgA subfamily. As to quaternary structure, monomer. Associates with 30S ribosomal subunit, binds 16S rRNA. Zn(2+) serves as cofactor.

The protein resides in the cytoplasm. Its function is as follows. One of several proteins that assist in the late maturation steps of the functional core of the 30S ribosomal subunit. Helps release RbfA from mature subunits. May play a role in the assembly of ribosomal proteins into the subunit. Circularly permuted GTPase that catalyzes slow GTP hydrolysis, GTPase activity is stimulated by the 30S ribosomal subunit. The chain is Small ribosomal subunit biogenesis GTPase RsgA from Streptococcus pyogenes serotype M3 (strain ATCC BAA-595 / MGAS315).